The primary structure comprises 507 residues: ATP synthase subunit alpha, chloroplastic (507 aa).

170 to 177 (GDRQTGKT) contacts ATP. Thr-257 is modified (phosphothreonine).

This sequence belongs to the ATPase alpha/beta chains family. In terms of assembly, F-type ATPases have 2 components, CF(1) - the catalytic core - and CF(0) - the membrane proton channel. CF(1) has five subunits: alpha(3), beta(3), gamma(1), delta(1), epsilon(1). CF(0) has four main subunits: a, b, b' and c.

It localises to the plastid. Its subcellular location is the chloroplast thylakoid membrane. It carries out the reaction ATP + H2O + 4 H(+)(in) = ADP + phosphate + 5 H(+)(out). Produces ATP from ADP in the presence of a proton gradient across the membrane. The alpha chain is a regulatory subunit. The chain is ATP synthase subunit alpha, chloroplastic from Draba nemorosa (Woodland whitlowgrass).